Consider the following 363-residue polypeptide: Flagellar P-ring protein 2 (363 aa).

The signal sequence occupies residues 1-20 (MKLRTCCISLMLLLALPLQA).

The protein belongs to the FlgI family. In terms of assembly, the basal body constitutes a major portion of the flagellar organelle and consists of four rings (L,P,S, and M) mounted on a central rod.

It localises to the periplasm. Its subcellular location is the bacterial flagellum basal body. Functionally, assembles around the rod to form the L-ring and probably protects the motor/basal body from shearing forces during rotation. This is Flagellar P-ring protein 2 from Photobacterium profundum (strain SS9).